The primary structure comprises 264 residues: Anamorsin homolog 2 (264 aa).

The segment at 1 to 142 (MAATAAALAV…KVSWSMGSSF (142 aa)) is N-terminal SAM-like domain. A linker region spans residues 143–174 (PLKKATKGLPKIQIDDDSELIDEDSLLTEDDL). 4 residues coordinate [2Fe-2S] cluster: Cys185, Cys194, Cys197, and Cys199. Positions 185-199 (CEVGATRKACKNCTC) are fe-S binding site A. Residues Cys225, Cys228, Cys236, and Cys239 each contribute to the [4Fe-4S] cluster site. 2 consecutive short sequence motifs (cx2C motif) follow at residues 225-228 (CGNC) and 236-239 (CGTC). Residues 225–239 (CGNCGLGDAFRCGTC) are fe-S binding site B.

This sequence belongs to the anamorsin family. Monomer. The cofactor is [2Fe-2S] cluster. Requires [4Fe-4S] cluster as cofactor.

The protein localises to the cytoplasm. The protein resides in the mitochondrion intermembrane space. In terms of biological role, component of the cytosolic iron-sulfur (Fe-S) protein assembly (CIA) machinery. Required for the maturation of extramitochondrial Fe-S proteins. Part of an electron transfer chain functioning in an early step of cytosolic Fe-S biogenesis, facilitating the de novo assembly of a [4Fe-4S] cluster on the cytosolic Fe-S scaffold complex. Electrons are transferred from NADPH via a FAD- and FMN-containing diflavin oxidoreductase. Together with the diflavin oxidoreductase, also required for the assembly of the diferric tyrosyl radical cofactor of ribonucleotide reductase (RNR), probably by providing electrons for reduction during radical cofactor maturation in the catalytic small subunit. This chain is Anamorsin homolog 2, found in Oryza sativa subsp. indica (Rice).